The following is a 1287-amino-acid chain: SCL-interrupting locus protein (1287 aa).

Residue Met-1 is modified to N-acetylmethionine. The interaction with RBM14 stretch occupies residues 1-1018 (MEPIYPFARP…IDSPTKVKKN (1018 aa)). The interaction with CPAP stretch occupies residues 231 to 781 (YKYGYLTMDE…VSVEAQSSPG (551 aa)). 2 disordered regions span residues 378 to 417 (RSSQKLSSGKMPIHDHDSGVEDEDFSPRPIPSPHPVSQKI) and 508 to 533 (PPAYKKGNPHTRNSIKPSSHNGPSHD). Ser-395 bears the Phosphoserine mark. Positions 517-529 (HTRNSIKPSSHNG) are enriched in polar residues. Residues 584-779 (PMELQIPTPP…ELVSVEAQSS (196 aa)) are PIN1-binding. Ser-753, Ser-779, and Ser-1135 each carry phosphoserine.

Homodimer. Interacts with PIN1 via its WW domain. This interaction is dependent on STIL mitotic phosphorylation. Interacts with CPAP. Interacts with RBM14 and this interaction interferes with the interaction of STIL with CPAP. Forms a complex with CPAP and SASS6. Interacts (via N-terminus) with CEP85; this interaction is essential for efficient centriolar targeting of STIL and subsequent PLK4 activation. Ubiquitinated. Post-translationally, phosphorylated following the activation of the mitotic checkpoint. Expressed in all hematopoietic tissues and cell lines. Highly expressed in a variety of tumors characterized by increased mitotic activity with highest expression in lung cancer.

Its subcellular location is the cytoplasm. The protein resides in the cytosol. The protein localises to the cytoskeleton. It localises to the microtubule organizing center. It is found in the centrosome. Its subcellular location is the centriole. The protein resides in the cell cortex. Functionally, immediate-early gene. Plays an important role in embryonic development as well as in cellular growth and proliferation; its long-term silencing affects cell survival and cell cycle distribution as well as decreases CDK1 activity correlated with reduced phosphorylation of CDK1. Plays a role as a positive regulator of the sonic hedgehog pathway, acting downstream of PTCH1. Plays an important role in the regulation of centriole duplication. Required for the onset of procentriole formation and proper mitotic progression. During procentriole formation, is essential for the correct loading of SASS6 and CPAP to the base of the procentriole to initiate procentriole assembly. In complex with STIL acts as a modulator of PLK4-driven cytoskeletal rearrangements and directional cell motility. The protein is SCL-interrupting locus protein (STIL) of Homo sapiens (Human).